The following is a 75-amino-acid chain: Putative defensin-like protein 55 (75 aa).

A signal peptide spans 1–19 (MNITKAYVIFFLVVILTNS). Intrachain disulfides connect Cys-39–Cys-73, Cys-43–Cys-66, Cys-52–Cys-71, and Cys-56–Cys-72.

This sequence belongs to the DEFL family.

It is found in the secreted. The sequence is that of Putative defensin-like protein 55 from Arabidopsis thaliana (Mouse-ear cress).